Consider the following 104-residue polypeptide: NADH-quinone oxidoreductase subunit K (104 aa).

The next 3 helical transmembrane spans lie at 4 to 24 (VPASAYLTLAIILFCIGLFGA), 31 to 51 (VIVLVCIELMLNAANLNLVAF), and 67 to 87 (LFTMAVAAAEAALGLAILIAL).

The protein belongs to the complex I subunit 4L family. NDH-1 is composed of 14 different subunits. Subunits NuoA, H, J, K, L, M, N constitute the membrane sector of the complex.

It is found in the cell membrane. The enzyme catalyses a quinone + NADH + 5 H(+)(in) = a quinol + NAD(+) + 4 H(+)(out). Its function is as follows. NDH-1 shuttles electrons from NADH, via FMN and iron-sulfur (Fe-S) centers, to quinones in the respiratory chain. The immediate electron acceptor for the enzyme in this species is believed to be a menaquinone. Couples the redox reaction to proton translocation (for every two electrons transferred, four hydrogen ions are translocated across the cytoplasmic membrane), and thus conserves the redox energy in a proton gradient. In Bacillus cereus (strain ATCC 14579 / DSM 31 / CCUG 7414 / JCM 2152 / NBRC 15305 / NCIMB 9373 / NCTC 2599 / NRRL B-3711), this protein is NADH-quinone oxidoreductase subunit K.